Reading from the N-terminus, the 217-residue chain is Tegument protein BKRF4 (217 aa).

The tract at residues 1-217 (MAMFLKSRGV…GNNNYNWPWL (217 aa)) is disordered. Positions 32–42 (YTLGSQASQSI) are enriched in polar residues. The span at 43-79 (QEEDVSDTDESDYSDEDEEIDLEEEYPSDEDPSEGSD) shows a compositional bias: acidic residues. An interaction with host histones H3/H4 region spans residues 63–64 (DL). The interval 81–84 (DPSW) is interaction with host H2A/H2B. Positions 89–102 (SDESDYSESDEDEA) are enriched in acidic residues. Residues 106–132 (SQASRSSRVSPSTQQSSGLTPTPSFSR) are compositionally biased toward low complexity. The segment covering 136–145 (RAPPRPPAPA) has biased composition (pro residues). Residues 208–217 (GNNNYNWPWL) are compositionally biased toward polar residues.

It belongs to the lymphocryptovirus BKRF4 family. As to quaternary structure, forms a complex with the host H3/H4 dimer and histone chaperone ASF1. Also forms a complex with host H2A/H2B dimer. Interacts (via C-terminus) with BGLF2; this interaction is important for infectious virion production.

The protein localises to the virion tegument. Its subcellular location is the host nucleus. It is found in the host cytoplasm. It localises to the host perinuclear region. Histone-binding protein that binds to histones H2A/H2B, H3/H4 and cellular chromatin to overcome the host DNA damage response triggered by the viral genome ends. Interferes with histone ubiquitination and recruitment of repair proteins. The protein is Tegument protein BKRF4 of Epstein-Barr virus (strain GD1) (HHV-4).